The primary structure comprises 192 residues: MCKDTYFSGEAIQLSDMLRAREERALRQLHLLKEYPEGSLLSVTMNIPGPIKTSPKLLEVFDIVIKAIQTALADDKICYQLRLLPTTGYEYYLITSLPSRDLKLKMIALETELPIGRLMDLDVLVLQNDLPHSISRTVLGGSPRQCFICSKEAKVCGRLRKHSVEEMQTAISKLLHSFFNKDNQSSSSDKTG.

The protein belongs to the CitX family.

The catalysed reaction is apo-[citrate lyase ACP] + 2'-(5''-triphospho-alpha-D-ribosyl)-3'-dephospho-CoA = holo-[citrate lyase ACP] + diphosphate. In terms of biological role, transfers 2-(5''-triphosphoribosyl)-3'-dephosphocoenzyme-A on a serine residue to the apo-acyl carrier protein (gamma chain) of the citrate lyase to yield holo-acyl carrier protein. The chain is Probable apo-citrate lyase phosphoribosyl-dephospho-CoA transferase from Streptococcus pyogenes serotype M3 (strain ATCC BAA-595 / MGAS315).